The sequence spans 810 residues: MGRLCTKFLTSVGCLILLLVTGSGSIKVLGEPTCFSDYIRTSTCEWFLDSAVDCSSQLCLHYRLMFFEFSENLTCIPRNSASTVCVCHMEMNRPVQSDRYQMELWAEHRQLWQGSFSPSGNVKPLAPDNLTLHTNVSDEWLLTWNNLYPSNNLLYKDLISMVNISREDNPAEFIVYNVTYKEPRLSFPINILMSGVYYTARVRVRSQILTGTWSEWSPSITWYNHFQLPLIQRLPLGVTISCLCIPLFCLFCYFSITKIKKIWWDQIPTPARSPLVAIIIQDAQVPLWDKQTRSQESTKYPHWKTCLDKLLPCLLKHRVKKKTDFPKAAPTKSLQSPGKAGWCPMEVSRTVLWPENVSVSVVRCMELFEAPVQNVEEEEDEIVKEDLSMSPENSGGCGFQESQADIMARLTENLFSDLLEAENGGLGQSALAESCSPLPSGSGQASVSWACLPMGPSEEATCQVTEQPSHPGPLSGSPAQSAPTLACTQVPLVLADNPAYRSFSDCCSPAPNPGELAPEQQQADHLEEEEPPSPADPHSSGPPMQPVESWEQILHMSVLQHGAAAGSTPAPAGGYQEFVQAVKQGAAQDPGVPGVRPSGDPGYKAFSSLLSSNGIRGDTAAAGTDDGHGGYKPFQNPVPNQSPSSVPLFTFGLDTELSPSPLNSDPPKSPPECLGLELGLKGGDWVKAPPPADQVPKPFGDDLGFGIVYSSLTCHLCGHLKQHHSQEEGGQSPIVASPGCGCCYDDRSPSLGSLSGALESCPEGIPPEANLMSAPKTPSNLSGEGKGPGHSPVPSQTTEVPVGALGIAVS.

An N-terminal signal peptide occupies residues 1-25 (MGRLCTKFLTSVGCLILLLVTGSGS). At 26–233 (IKVLGEPTCF…NHFQLPLIQR (208 aa)) the chain is on the extracellular side. Residues cysteine 34 and cysteine 44 are joined by a disulfide bond. N-linked (GlcNAc...) asparagine glycosylation occurs at asparagine 72. A disulfide bond links cysteine 75 and cysteine 87. In terms of domain architecture, Fibronectin type-III spans 126–224 (APDNLTLHTN…EWSPSITWYN (99 aa)). Residues asparagine 129, asparagine 135, and asparagine 163 are each glycosylated (N-linked (GlcNAc...) asparagine). Residue serine 165 is modified to Phosphoserine. The WSXWS motif signature appears at 213–217 (WSEWS). The helical transmembrane segment at 234 to 257 (LPLGVTISCLCIPLFCLFCYFSIT) threads the bilayer. Residues 258 to 810 (KIKKIWWDQI…PVGALGIAVS (553 aa)) lie on the Cytoplasmic side of the membrane. Residues 263 to 271 (WWDQIPTPA) carry the Box 1 motif motif. The segment at 441–557 (GSGQASVSWA…ESWEQILHMS (117 aa)) is required for IRS1 activation and IL4-induced cell growth. The interval 460–482 (ATCQVTEQPSHPGPLSGSPAQSA) is disordered. Residue tyrosine 500 is modified to Phosphotyrosine. The segment at 510 to 546 (APNPGELAPEQQQADHLEEEEPPSPADPHSSGPPMQP) is disordered. A required for IL4-induced gene expression region spans residues 557–653 (SVLQHGAAAG…SSVPLFTFGL (97 aa)). 3 positions are modified to phosphotyrosine: tyrosine 575, tyrosine 603, and tyrosine 631. The interval 586 to 672 (AAQDPGVPGV…NSDPPKSPPE (87 aa)) is disordered. The span at 635 to 647 (QNPVPNQSPSSVP) shows a compositional bias: low complexity. The ITIM motif signature appears at 707-712 (IVYSSL). Residues 766 to 810 (PPEANLMSAPKTPSNLSGEGKGPGHSPVPSQTTEVPVGALGIAVS) form a disordered region.

It belongs to the type I cytokine receptor family. Type 4 subfamily. In terms of assembly, the functional IL4 receptor is formed by initial binding of IL4 to IL4R. Subsequent recruitment to the complex of the common gamma chain, in immune cells, creates a type I receptor and, in non-immune cells, of IL13RA1 forms a type II receptor. IL4R can also interact with the IL13/IL13RA1 complex to form a similar type II receptor. Interacts with the SH2-containing phosphatases, PTPN6/SHIP1, PTPN11/SHIP2 and INPP5D/SHIP. Interacts with JAK3. Interacts with PIK3C3. Interacts with JAK1 through a Box 1-containing region; inhibited by SOCS5. Interacts with SOCS5; inhibits IL4 signaling. Interacts with CLM1. Interacts with IL13RA2. On IL4 binding, phosphorylated on C-terminal tyrosine residues. In terms of processing, soluble IL4R can also be produced by proteolytic cleavage at the cell surface (shedding). In terms of tissue distribution, expressed in both Th1 and Th2 cells.

It localises to the cell membrane. Its subcellular location is the secreted. Its function is as follows. Receptor for both interleukin 4 and interleukin 13. Couples to the JAK1/2/3-STAT6 pathway. The IL4 response is involved in promoting Th2 differentiation. The IL4/IL13 responses are involved in regulating IgE production and, chemokine and mucus production at sites of allergic inflammation. In certain cell types, can signal through activation of insulin receptor substrates, IRS1/IRS2. In Mus musculus (Mouse), this protein is Interleukin-4 receptor subunit alpha (Il4r).